A 131-amino-acid chain; its full sequence is Phosphoribosyl-AMP cyclohydrolase (131 aa).

Mg(2+) is bound at residue D80. Residue C81 participates in Zn(2+) binding. The Mg(2+) site is built by D82 and D84. C98 and C105 together coordinate Zn(2+).

Belongs to the PRA-CH family. In terms of assembly, homodimer. Mg(2+) serves as cofactor. It depends on Zn(2+) as a cofactor.

Its subcellular location is the cytoplasm. The enzyme catalyses 1-(5-phospho-beta-D-ribosyl)-5'-AMP + H2O = 1-(5-phospho-beta-D-ribosyl)-5-[(5-phospho-beta-D-ribosylamino)methylideneamino]imidazole-4-carboxamide. It participates in amino-acid biosynthesis; L-histidine biosynthesis; L-histidine from 5-phospho-alpha-D-ribose 1-diphosphate: step 3/9. Functionally, catalyzes the hydrolysis of the adenine ring of phosphoribosyl-AMP. The polypeptide is Phosphoribosyl-AMP cyclohydrolase (Azoarcus sp. (strain BH72)).